The following is a 240-amino-acid chain: Ribosomal RNA small subunit methyltransferase G (240 aa).

Residues Gly80, Phe85, 103 to 105, 131 to 132, and Arg150 contribute to the S-adenosyl-L-methionine site; these read DSS and AE.

Belongs to the methyltransferase superfamily. RNA methyltransferase RsmG family.

The protein resides in the cytoplasm. Specifically methylates the N7 position of a guanine in 16S rRNA. The polypeptide is Ribosomal RNA small subunit methyltransferase G (Thermoanaerobacter pseudethanolicus (strain ATCC 33223 / 39E) (Clostridium thermohydrosulfuricum)).